A 174-amino-acid polypeptide reads, in one-letter code: Adenine phosphoribosyltransferase (174 aa).

The protein belongs to the purine/pyrimidine phosphoribosyltransferase family. Homodimer.

It is found in the cytoplasm. The enzyme catalyses AMP + diphosphate = 5-phospho-alpha-D-ribose 1-diphosphate + adenine. The protein operates within purine metabolism; AMP biosynthesis via salvage pathway; AMP from adenine: step 1/1. Catalyzes a salvage reaction resulting in the formation of AMP, that is energically less costly than de novo synthesis. This is Adenine phosphoribosyltransferase from Photobacterium profundum (strain SS9).